The following is a 467-amino-acid chain: Asparagine--tRNA ligase (467 aa).

Belongs to the class-II aminoacyl-tRNA synthetase family. In terms of assembly, homodimer.

It is found in the cytoplasm. It carries out the reaction tRNA(Asn) + L-asparagine + ATP = L-asparaginyl-tRNA(Asn) + AMP + diphosphate + H(+). The polypeptide is Asparagine--tRNA ligase (Haemophilus influenzae (strain ATCC 51907 / DSM 11121 / KW20 / Rd)).